Consider the following 114-residue polypeptide: Putative pterin-4-alpha-carbinolamine dehydratase (114 aa).

It belongs to the pterin-4-alpha-carbinolamine dehydratase family.

It carries out the reaction (4aS,6R)-4a-hydroxy-L-erythro-5,6,7,8-tetrahydrobiopterin = (6R)-L-erythro-6,7-dihydrobiopterin + H2O. This is Putative pterin-4-alpha-carbinolamine dehydratase from Chlorobium luteolum (strain DSM 273 / BCRC 81028 / 2530) (Pelodictyon luteolum).